Consider the following 302-residue polypeptide: Sulfate adenylyltransferase subunit 2 (302 aa).

The protein belongs to the PAPS reductase family. CysD subfamily. As to quaternary structure, heterodimer composed of CysD, the smaller subunit, and CysN.

The catalysed reaction is sulfate + ATP + H(+) = adenosine 5'-phosphosulfate + diphosphate. The protein operates within sulfur metabolism; hydrogen sulfide biosynthesis; sulfite from sulfate: step 1/3. Functionally, with CysN forms the ATP sulfurylase (ATPS) that catalyzes the adenylation of sulfate producing adenosine 5'-phosphosulfate (APS) and diphosphate, the first enzymatic step in sulfur assimilation pathway. APS synthesis involves the formation of a high-energy phosphoric-sulfuric acid anhydride bond driven by GTP hydrolysis by CysN coupled to ATP hydrolysis by CysD. The polypeptide is Sulfate adenylyltransferase subunit 2 (Escherichia coli O81 (strain ED1a)).